A 428-amino-acid polypeptide reads, in one-letter code: Tol-Pal system protein TolB (428 aa).

A signal peptide spans 1–23; that stretch reads MRRLYQTVCTLALLLVGLQAAHA.

This sequence belongs to the TolB family. As to quaternary structure, the Tol-Pal system is composed of five core proteins: the inner membrane proteins TolA, TolQ and TolR, the periplasmic protein TolB and the outer membrane protein Pal. They form a network linking the inner and outer membranes and the peptidoglycan layer.

It localises to the periplasm. Functionally, part of the Tol-Pal system, which plays a role in outer membrane invagination during cell division and is important for maintaining outer membrane integrity. This is Tol-Pal system protein TolB from Alkalilimnicola ehrlichii (strain ATCC BAA-1101 / DSM 17681 / MLHE-1).